Here is a 268-residue protein sequence, read N- to C-terminus: Zwei Ig domain protein zig-8 (268 aa).

The signal sequence occupies residues M1 to G21. Ig-like C2-type domains lie at P40–Y128 and P140–T251. The cysteines at positions 57 and 118 are disulfide-linked. N-linked (GlcNAc...) asparagine glycans are attached at residues N82, N155, N164, and N191. Cysteines 165 and 226 form a disulfide.

As to expression, expressed in PVT neurons and pharyngeal muscles.

It is found in the secreted. Its function is as follows. Together with zig-5, required postembryonically to maintain the position of ASI and ASH head neuron cell bodies and ventral nerve cord axons of PVQ, PVP and HSN neurons by preventing their displacement that could occur during body growth and movement. May act by reducing L1CAM-like protein sax-7 (long isoform) adhesion. The sequence is that of Zwei Ig domain protein zig-8 from Caenorhabditis elegans.